A 165-amino-acid polypeptide reads, in one-letter code: Xanthine-guanine phosphoribosyltransferase (165 aa).

5-phospho-alpha-D-ribose 1-diphosphate-binding positions include 41–42 (RG) and 98–106 (DDLTDTGKT). Asp-99 contributes to the Mg(2+) binding site. Residues Asp-102 and Ile-145 each coordinate guanine. Xanthine is bound by residues Asp-102 and Ile-145. GMP contacts are provided by residues 102–106 (DTGKT) and 144–145 (WI).

It belongs to the purine/pyrimidine phosphoribosyltransferase family. XGPT subfamily. Homotetramer. Mg(2+) serves as cofactor.

It is found in the cell inner membrane. It catalyses the reaction GMP + diphosphate = guanine + 5-phospho-alpha-D-ribose 1-diphosphate. It carries out the reaction XMP + diphosphate = xanthine + 5-phospho-alpha-D-ribose 1-diphosphate. The catalysed reaction is IMP + diphosphate = hypoxanthine + 5-phospho-alpha-D-ribose 1-diphosphate. It participates in purine metabolism; GMP biosynthesis via salvage pathway; GMP from guanine: step 1/1. Its pathway is purine metabolism; XMP biosynthesis via salvage pathway; XMP from xanthine: step 1/1. Functionally, purine salvage pathway enzyme that catalyzes the transfer of the ribosyl-5-phosphate group from 5-phospho-alpha-D-ribose 1-diphosphate (PRPP) to the N9 position of the 6-oxopurines guanine and xanthine to form the corresponding ribonucleotides GMP (guanosine 5'-monophosphate) and XMP (xanthosine 5'-monophosphate), with the release of PPi. To a lesser extent, also acts on hypoxanthine. In Brucella suis (strain ATCC 23445 / NCTC 10510), this protein is Xanthine-guanine phosphoribosyltransferase.